Reading from the N-terminus, the 95-residue chain is Large ribosomal subunit protein bL25 (95 aa).

Belongs to the bacterial ribosomal protein bL25 family. Part of the 50S ribosomal subunit; part of the 5S rRNA/L5/L18/L25 subcomplex. Contacts the 5S rRNA. Binds to the 5S rRNA independently of L5 and L18.

This is one of the proteins that binds to the 5S RNA in the ribosome where it forms part of the central protuberance. The polypeptide is Large ribosomal subunit protein bL25 (Shewanella loihica (strain ATCC BAA-1088 / PV-4)).